We begin with the raw amino-acid sequence, 1122 residues long: Protein CAF130 (1122 aa).

The tract at residues 1–24 is disordered; the sequence is MTKKKAATNYAERQNLASEDSSGD. Over residues 11–24 the composition is skewed to polar residues; that stretch reads AERQNLASEDSSGD. S1042 carries the post-translational modification Phosphoserine.

Subunit of the 1.0 MDa CCR4-NOT core complex that contains CCR4, CAF1, NOT1, NOT2, NOT3, NOT4, NOT5, CAF40 and CAF130. In the complex interacts with NOT1. The core complex probably is part of a less characterized 1.9 MDa CCR4-NOT complex.

The protein localises to the cytoplasm. It localises to the nucleus. Its function is as follows. Acts as a component of the CCR4-NOT core complex, which in the nucleus seems to be a general transcription factor, and in the cytoplasm the major mRNA deadenylase involved in mRNA turnover. This is Protein CAF130 (CAF130) from Saccharomyces cerevisiae (strain ATCC 204508 / S288c) (Baker's yeast).